A 227-amino-acid chain; its full sequence is Octanoyltransferase (227 aa).

The region spanning 35-222 (EAYENRIIMC…ELGRLLNEKK (188 aa)) is the BPL/LPL catalytic domain. Substrate contacts are provided by residues 80 to 87 (RGGDITYH), 152 to 154 (AIG), and 165 to 167 (GLA). The Acyl-thioester intermediate role is filled by Cys183.

It belongs to the LipB family.

It localises to the cytoplasm. It catalyses the reaction octanoyl-[ACP] + L-lysyl-[protein] = N(6)-octanoyl-L-lysyl-[protein] + holo-[ACP] + H(+). Its pathway is protein modification; protein lipoylation via endogenous pathway; protein N(6)-(lipoyl)lysine from octanoyl-[acyl-carrier-protein]: step 1/2. Catalyzes the transfer of endogenously produced octanoic acid from octanoyl-acyl-carrier-protein onto the lipoyl domains of lipoate-dependent enzymes. Lipoyl-ACP can also act as a substrate although octanoyl-ACP is likely to be the physiological substrate. In Bacteroides thetaiotaomicron (strain ATCC 29148 / DSM 2079 / JCM 5827 / CCUG 10774 / NCTC 10582 / VPI-5482 / E50), this protein is Octanoyltransferase.